Here is a 353-residue protein sequence, read N- to C-terminus: Photosystem II D2 protein (353 aa).

Threonine 2 is subject to N-acetylthreonine. Threonine 2 carries the post-translational modification Phosphothreonine. Residues 41-61 (CAYFAVGGWFTGTTFVTSWYT) traverse the membrane as a helical segment. Histidine 118 serves as a coordination point for chlorophyll a. The helical transmembrane segment at 125–141 (GFMLRQFELARSVQLRP) threads the bilayer. The pheophytin a site is built by glutamine 130 and asparagine 143. Residues 153–166 (VFVSVFLIYPLGQS) traverse the membrane as a helical segment. Histidine 198 provides a ligand contact to chlorophyll a. A helical membrane pass occupies residues 208-228 (AALLCAIHGATVENTLFEDGD). A plastoquinone contacts are provided by histidine 215 and phenylalanine 262. Residue histidine 215 participates in Fe cation binding. Residue histidine 269 coordinates Fe cation. A helical transmembrane segment spans residues 279-295 (GLWMSALGVVGLALNLR).

It belongs to the reaction center PufL/M/PsbA/D family. In terms of assembly, PSII is composed of 1 copy each of membrane proteins PsbA, PsbB, PsbC, PsbD, PsbE, PsbF, PsbH, PsbI, PsbJ, PsbK, PsbL, PsbM, PsbT, PsbX, PsbY, PsbZ, Psb30/Ycf12, at least 3 peripheral proteins of the oxygen-evolving complex and a large number of cofactors. It forms dimeric complexes. It depends on The D1/D2 heterodimer binds P680, chlorophylls that are the primary electron donor of PSII, and subsequent electron acceptors. It shares a non-heme iron and each subunit binds pheophytin, quinone, additional chlorophylls, carotenoids and lipids. There is also a Cl(-1) ion associated with D1 and D2, which is required for oxygen evolution. The PSII complex binds additional chlorophylls, carotenoids and specific lipids. as a cofactor.

The protein localises to the plastid. It is found in the chloroplast thylakoid membrane. It catalyses the reaction 2 a plastoquinone + 4 hnu + 2 H2O = 2 a plastoquinol + O2. Photosystem II (PSII) is a light-driven water:plastoquinone oxidoreductase that uses light energy to abstract electrons from H(2)O, generating O(2) and a proton gradient subsequently used for ATP formation. It consists of a core antenna complex that captures photons, and an electron transfer chain that converts photonic excitation into a charge separation. The D1/D2 (PsbA/PsbD) reaction center heterodimer binds P680, the primary electron donor of PSII as well as several subsequent electron acceptors. D2 is needed for assembly of a stable PSII complex. This is Photosystem II D2 protein from Cicer arietinum (Chickpea).